The chain runs to 460 residues: MSPCKLLPFCVALALTGCSLAPDYQRPAMPVPQQFSLSQNGLVNAADNYQNAGWRTFFVDNQVKTLISEALENNRDLRMATLKVQEARAQYRLTDADRYPQLNGEGSGSWSGNLKGDSATTREFSTGLNASFDLDFFGRLKNMSEAERQNYLATEEAQRAVHILLVSNVAQSYFNQQLAYAQLQIAEETLRNYQQSYAFVEKQLLTGSSNVLALEQARGVIESTRSDIAKRQGELAQANNALQLLLGSYGKLPQAQTVNSDSLQSVKLPAGLSSQILLQRPDIMEAEHALMAANANIGAARAAFFPSISLTSGISTASSDLSSLFNASSGMWNFIPKIEIPIFNAGRNQANLDIAEIRQQQSVVNYEQKIQNAFKEVADALALRQSLNDQISAQQRYLASLQITLQRARALYQHGAVSYLEVLDAERSLFATRQTVLDLNYARQVNEISLYTALGGGWQQ.

The first 17 residues, 1–17 (MSPCKLLPFCVALALTG), serve as a signal peptide directing secretion. Cysteine 18 carries N-palmitoyl cysteine lipidation. A lipid anchor (S-diacylglycerol cysteine) is attached at cysteine 18.

It belongs to the outer membrane factor (OMF) (TC 1.B.17) family. Homotrimer. Component of the cus efflux system composed of CusA, CusB, CusC and CusF.

The protein resides in the cell outer membrane. In terms of biological role, forms pores that allow passive diffusion of cations across the outer membrane. Part of a cation efflux system that mediates resistance to copper and silver. The sequence is that of Cation efflux system protein CusC (cusC) from Escherichia coli O157:H7.